The primary structure comprises 411 residues: Secretion apparatus protein BsaZ (411 aa).

4 consecutive transmembrane segments (helical) span residues 28 to 48, 80 to 100, 137 to 157, and 175 to 195; these read IVAL…VDLT, IAAP…LVQS, ALLY…LYHA, and IVLT…VLIL. Residues 341 to 411 are disordered; that stretch reads AANRGGPPPE…APARTGDQNA (71 aa). A compositionally biased stretch (low complexity) spans 370 to 404; sequence DACADNAFPDDAPPGAAAPNAGSPDGPAPDGGAPA.

Belongs to the type III secretion exporter family.

Its subcellular location is the cell membrane. Part of the bsa type III secretion system, is involved in the intracellular replication of invading bacteria inside the host cell. Probably necessary for the lysis of the vacuole membrane and escape into the host cell cytoplasm. This chain is Secretion apparatus protein BsaZ (bsaZ), found in Burkholderia pseudomallei (strain K96243).